Consider the following 249-residue polypeptide: 1-(5-phosphoribosyl)-5-[(5-phosphoribosylamino)methylideneamino] imidazole-4-carboxamide isomerase (249 aa).

Aspartate 11 functions as the Proton acceptor in the catalytic mechanism. Aspartate 133 acts as the Proton donor in catalysis.

It belongs to the HisA/HisF family.

The protein localises to the cytoplasm. It carries out the reaction 1-(5-phospho-beta-D-ribosyl)-5-[(5-phospho-beta-D-ribosylamino)methylideneamino]imidazole-4-carboxamide = 5-[(5-phospho-1-deoxy-D-ribulos-1-ylimino)methylamino]-1-(5-phospho-beta-D-ribosyl)imidazole-4-carboxamide. The protein operates within amino-acid biosynthesis; L-histidine biosynthesis; L-histidine from 5-phospho-alpha-D-ribose 1-diphosphate: step 4/9. The protein is 1-(5-phosphoribosyl)-5-[(5-phosphoribosylamino)methylideneamino] imidazole-4-carboxamide isomerase of Haemophilus influenzae (strain 86-028NP).